The chain runs to 487 residues: Melanopsin (487 aa).

The interval Met-1–Pro-37 is disordered. Topologically, residues Met-1 to Thr-67 are extracellular. Residues Leu-68–Tyr-88 form a helical membrane-spanning segment. The Cytoplasmic segment spans residues Thr-89–Met-102. The helical transmembrane segment at Phe-103 to Phe-123 threads the bilayer. At Ala-124 to Glu-139 the chain is on the extracellular side. An intrachain disulfide couples Cys-138 to Cys-216. The chain crosses the membrane as a helical span at residues Phe-140 to Ala-160. Topologically, residues Leu-161–Ala-183 are cytoplasmic. The chain crosses the membrane as a helical span at residues Leu-184 to Trp-204. The Extracellular segment spans residues Ser-205–Leu-233. Residues Leu-234–Phe-254 traverse the membrane as a helical segment. Topologically, residues Arg-255–Lys-291 are cytoplasmic. The helical transmembrane segment at Ile-292–Leu-312 threads the bilayer. Topologically, residues Met-313–Asn-327 are extracellular. A helical membrane pass occupies residues Ser-328–Thr-348. Residue Lys-335 is modified to N6-(retinylidene)lysine. Residues His-349–His-487 are Cytoplasmic-facing. Positions Cys-436–Pro-459 are disordered. Over residues Leu-440–Glu-457 the composition is skewed to basic and acidic residues.

This sequence belongs to the G-protein coupled receptor 1 family. Opsin subfamily. As to expression, eye. Expression is restricted within the ganglion cell layer.

The protein resides in the cell membrane. It localises to the cell projection. The protein localises to the axon. It is found in the dendrite. Its subcellular location is the perikaryon. Photoreceptor that binds cis-retinaldehydes. Contributes to pupillar reflex, photoentrainment and other non-image forming responses to light. May be involved in the optokinetic visual tracking response. May be involved in the regulation of retinal hyaloid vessel growth and regression. This chain is Melanopsin (OPN4), found in Felis catus (Cat).